Here is a 165-residue protein sequence, read N- to C-terminus: MASTSSFDVVSDFDRQELVNTLDQVRRDVSTRYDLKDSKTEIVLEETEMVITTASDMTLQAVEDVLRAKATKRNLSLKIFDFQTPESVGGNRIQQVVKLRKGLSQEIAKKLSKIVRDELKKVTVAIQGESVRITGKSKDDLQAAIQLVKSKEDELDVPLQFENYR.

Belongs to the YajQ family.

Its function is as follows. Nucleotide-binding protein. The polypeptide is Nucleotide-binding protein Syncc9902_1708 (Synechococcus sp. (strain CC9902)).